We begin with the raw amino-acid sequence, 399 residues long: Delta(12) acyl-lipid conjugase (11E,13E-forming) (399 aa).

The segment at 11-30 is disordered; it reads RNGGGPKKKMGPGQGLGPGE. The next 2 helical transmembrane spans lie at 61–81 and 93–113; these read FSYL…ADTY and LAWP…WGIA. The Histidine box-1 motif lies at 114 to 118; it reads HDCGH. A helical transmembrane segment spans residues 126-146; that stretch reads LVDDVVGFLIHSLVFVPYFSF. The short motif at 150-154 is the Histidine box-2 element; the sequence is HRRHH. Helical transmembrane passes span 188–208, 232–252, and 258–278; these read VFII…FNIS, VLVH…YRIA, and GWLI…VVLI. A Histidine box-3 motif is present at residues 325-329; sequence HVVHH.

It belongs to the fatty acid desaturase type 1 family. Expressed in developing seeds, but not in leaves.

The protein localises to the membrane. The enzyme catalyses a (9Z,12Z)-octadecadienoyl-containing glycerolipid + 2 Fe(II)-[cytochrome b5] + O2 + 2 H(+) = a (9Z,11E,13E)-octadecatrienoyl-containing glycerolipid + 2 Fe(III)-[cytochrome b5] + 2 H2O. The catalysed reaction is (9Z,12Z,15Z)-octadecatrienoyl-containing glycerolipid + 2 Fe(II)-[cytochrome b5] + O2 + 2 H(+) = a (9Z,11E,13E,15Z)-octadecatetraenoyl-containing glycerolipid + 2 Fe(III)-[cytochrome b5] + 2 H2O. Its pathway is lipid metabolism; polyunsaturated fatty acid biosynthesis. Functionally, converts linoleic acid to alpha-eleostearic acid (18:3(9Z,11E,13E)) and alpha-linolenic acid to alpha-parinaric acid (18:4(9Z,11E, 13E, 15Z)). Converts a single cis double bond at carbon 12 to two conjugated trans bonds at positions 11 and 13. The protein is Delta(12) acyl-lipid conjugase (11E,13E-forming) of Momordica charantia (Bitter gourd).